The chain runs to 277 residues: Large ribosomal subunit protein uL2 (277 aa).

Disordered regions lie at residues 32-58 (KSLT…RGGG) and 225-277 (VAMN…RRNK). Residues 258–277 (YKTRKKKRYSDKFIIKRRNK) show a composition bias toward basic residues.

Belongs to the universal ribosomal protein uL2 family. In terms of assembly, part of the 50S ribosomal subunit. Forms a bridge to the 30S subunit in the 70S ribosome.

In terms of biological role, one of the primary rRNA binding proteins. Required for association of the 30S and 50S subunits to form the 70S ribosome, for tRNA binding and peptide bond formation. It has been suggested to have peptidyltransferase activity; this is somewhat controversial. Makes several contacts with the 16S rRNA in the 70S ribosome. The chain is Large ribosomal subunit protein uL2 from Borreliella afzelii (strain PKo) (Borrelia afzelii).